Consider the following 195-residue polypeptide: MMNETGMAAAPAEAAWRIWQAPRQQTAFRQLMTAFSYPGRVVPLADGAESALLLVLTTLVDSACALADPLHALSSDDLRRLGVRSASVEAAEFVLADGNRLLEATPRLGSLENPEQGATVVMRVSRFGEGPHLRLTGPGIQHEQVLQVSGIDPGWWKQRSEWNAHFPLGVDLILVSGHEVAVLPRTTHINLKGAH.

Belongs to the PhnH family.

Belongs to an operon involved in hypophosphite oxidation. Exact function not known. The chain is Putative C-P lyase subunit protein HtxG (htxG) from Stutzerimonas stutzeri (Pseudomonas stutzeri).